The sequence spans 119 residues: uncharacterized protein (119 aa).

Residues 1–29 (MKKVGEEEIKQEENEKEKIVKKLNESDVK) adopt a coiled-coil conformation.

This is an uncharacterized protein from Acidianus sp. F28 (AFV-2).